The primary structure comprises 523 residues: Occludin (523 aa).

A disordered region spans residues 1–20 (MSVRPFESPPPYRPDEFKPN). Over 1–66 (MSVRPFESPP…KWTSPPGVIR (66 aa)) the chain is Cytoplasmic. The MARVEL domain maps to 60–269 (SPPGVIRILS…IIVFAVKTRR (210 aa)). A helical membrane pass occupies residues 67 to 87 (ILSMLVIVMCIAVFACVASTL). At 88–140 (AWDRAYGTGIFGGSMNYPYGSGFGSYGGGFGGYGYGYGYGYGGYTDPRAAKGF) the chain is on the extracellular side. A helical membrane pass occupies residues 141-161 (LLAMAAFCFIASLVIFVTSVI). Residues 162 to 173 (RSGMSRTRRYYL) are Cytoplasmic-facing. A helical membrane pass occupies residues 174–194 (IVIIVSAILGIMVFIATIVYI). Topologically, residues 195–244 (MGVNPTAQASGSMYGSQIYTICSQFYTPGGTGLYVDQYLYHYCVVDPQEA) are extracellular. A disulfide bond links Cys-216 and Cys-237. The helical transmembrane segment at 245–265 (IAIVLGFMIIVAFALIIVFAV) threads the bilayer. The Cytoplasmic segment spans residues 266-523 (KTRRKMDRYD…MVGDYDRRKT (258 aa)). Ser-302 carries the phosphoserine modification. The interval 302–338 (SAGTQDMPPPPSDYAERVDSPMAYSSNGKVNGKRSYP) is disordered. Thr-305 is modified (phosphothreonine). Phosphoserine occurs at positions 313, 321, 340, and 360. Positions 363–408 (DFRQPRYSSNDNLETPSKRTPTKGKAGKAKRTDPDHYETDYTTGGE) are disordered. The span at 368 to 381 (RYSSNDNLETPSKR) shows a compositional bias: polar residues. Tyr-369 is modified (phosphotyrosine). A phosphoserine mark is found at Ser-370 and Ser-371. The segment covering 382 to 391 (TPTKGKAGKA) has biased composition (basic residues). The span at 392–401 (KRTDPDHYET) shows a compositional bias: basic and acidic residues. Phosphotyrosine occurs at positions 399 and 403. Thr-404 and Thr-405 each carry phosphothreonine; by PKC/PRKCH. Ser-409 bears the Phosphoserine mark. Residues 415-523 (EDWLREYPPI…MVGDYDRRKT (109 aa)) form the OCEL domain. Residues 433-489 (YKRNFDAGLQEYKSLLAELDEVNKELSRLDRELDDYREESEEYMAAADEYNRLKQVK) are a coiled coil. Phosphoserine is present on Ser-491.

Belongs to the ELL/occludin family. Interacts with TJP1/ZO1. Interacts with VAPA. Interacts with CLDN1, CLDN6, CLDN9, CLDN11, CLDN12 and CLDN17. Interacts with PLSCR1. Interacts with LSR, ILDR1 and ILDR2. Interacts with TJP2/ZO2. Dephosphorylated by PTPRJ.

It localises to the cell membrane. The protein localises to the cell junction. Its subcellular location is the tight junction. Functionally, may play a role in the formation and regulation of the tight junction (TJ) paracellular permeability barrier. May be involved in the organization of actin in endothelial cells. The chain is Occludin (Ocln) from Rattus norvegicus (Rat).